The sequence spans 452 residues: Phosphoglucosamine mutase (452 aa).

The active-site Phosphoserine intermediate is the serine 104. Mg(2+)-binding residues include serine 104, aspartate 241, aspartate 243, and aspartate 245. Serine 104 is subject to Phosphoserine.

Belongs to the phosphohexose mutase family. It depends on Mg(2+) as a cofactor. Post-translationally, activated by phosphorylation.

The catalysed reaction is alpha-D-glucosamine 1-phosphate = D-glucosamine 6-phosphate. Catalyzes the conversion of glucosamine-6-phosphate to glucosamine-1-phosphate. This is Phosphoglucosamine mutase from Arthrobacter sp. (strain FB24).